Reading from the N-terminus, the 386-residue chain is Homogentisate solanesyltransferase, chloroplastic (386 aa).

The N-terminal 69 residues, 1 to 69 (MELSISQSPR…STNYRKISIR (69 aa)), are a transit peptide targeting the chloroplast. 8 helical membrane passes run 130–150 (VLKA…IVGI), 181–201 (LVIF…GPFI), 204–220 (LYSL…VPPL), 225–245 (FPVA…NFGV), 259–279 (WSAP…VIAI), 306–326 (IAFL…SLAF), 335–355 (SLMI…TWVL), and 365–385 (ISGY…LFPF).

This sequence belongs to the UbiA prenyltransferase family.

The protein resides in the plastid. The protein localises to the chloroplast membrane. The catalysed reaction is all-trans-nonaprenyl diphosphate + homogentisate + H(+) = 2-methyl-6-(all-trans-nonaprenyl)benzene-1,4-diol + CO2 + diphosphate. Inhibited by haloxydine (3,5-dichloro-2,6-difluoro-4-haloxypyridine). Functionally, involved in the synthesis of plastoquinone-9. Can use both homogentisic acid and 2,5-dihydroxyphenylacetic acid gamma-lactone as prenyl acceptors, and solanesyl diphosphate &gt; farnesyl diphosphate &gt; geranylgeranyl diphosphate &gt;&gt; phytyl diphosphate as prenyl donors. Do not catalyze the decardoxylation of homogentisate uncoupled from prenylation. The polypeptide is Homogentisate solanesyltransferase, chloroplastic (HST) (Arabidopsis thaliana (Mouse-ear cress)).